The chain runs to 512 residues: Probable pectinesterase/pectinesterase inhibitor 54 (512 aa).

The first 24 residues, Met-1–Ser-24, serve as a signal peptide directing secretion. Positions Phe-29 to Leu-193 are pectinesterase inhibitor 54. N-linked (GlcNAc...) asparagine glycans are attached at residues Asn-71 and Asn-131. A pectinesterase 54 region spans residues His-229–Glu-496. Gln-302 is a binding site for substrate. Catalysis depends on Asp-325, which acts as the Proton donor; for pectinesterase activity. Cys-339 and Cys-359 are joined by a disulfide. The active-site Nucleophile; for pectinesterase activity is the Asp-346. 2 residues coordinate substrate: Arg-415 and Trp-417.

The protein in the N-terminal section; belongs to the PMEI family. This sequence in the C-terminal section; belongs to the pectinesterase family. As to expression, expressed in siliques.

Its subcellular location is the secreted. The protein resides in the cell wall. The catalysed reaction is [(1-&gt;4)-alpha-D-galacturonosyl methyl ester](n) + n H2O = [(1-&gt;4)-alpha-D-galacturonosyl](n) + n methanol + n H(+). It functions in the pathway glycan metabolism; pectin degradation; 2-dehydro-3-deoxy-D-gluconate from pectin: step 1/5. Acts in the modification of cell walls via demethylesterification of cell wall pectin. This Arabidopsis thaliana (Mouse-ear cress) protein is Probable pectinesterase/pectinesterase inhibitor 54 (PME54).